The following is a 246-amino-acid chain: MVKILGVIPARYASSRFPGKPLVKIGDKTMIEWTYRNASRSTALSELVVATDDTRIHEVVQGFGGNSVMTRADHISGTDRIIEVANLFSEYSIIINIQGDEPGIEPELIDGVAGLKASHPEWKMSTAAVPLIDFSHGEDPNRVKVIIDRNGKAIYFSRSLIPSQFKQTVPLYRHLGIYGYDRDFLLKYNSLPKSNLEESESLEQLRAIEAGYGIGVYLAQEAGLSVDTPADLEVVIEDFKKRKWIT.

It belongs to the KdsB family.

Its subcellular location is the cytoplasm. It catalyses the reaction 3-deoxy-alpha-D-manno-oct-2-ulosonate + CTP = CMP-3-deoxy-beta-D-manno-octulosonate + diphosphate. It participates in nucleotide-sugar biosynthesis; CMP-3-deoxy-D-manno-octulosonate biosynthesis; CMP-3-deoxy-D-manno-octulosonate from 3-deoxy-D-manno-octulosonate and CTP: step 1/1. Its pathway is bacterial outer membrane biogenesis; lipopolysaccharide biosynthesis. Functionally, activates KDO (a required 8-carbon sugar) for incorporation into bacterial lipopolysaccharide in Gram-negative bacteria. In Leptospira borgpetersenii serovar Hardjo-bovis (strain JB197), this protein is 3-deoxy-manno-octulosonate cytidylyltransferase.